Here is a 508-residue protein sequence, read N- to C-terminus: UBX domain-containing protein 4 (508 aa).

Positions Met1–Glu200 are interaction with UBQLN1. Residues Met1–Thr413 lie on the Cytoplasmic side of the membrane. 2 stretches are compositionally biased toward polar residues: residues Ser117–Asn151 and Thr160–Ser187. The segment at Ser117–Asn196 is disordered. A UBX domain is found at Glu315–Val393. The stretch at Leu414 to Phe434 is an intramembrane region. Over Ser435 to Met508 the chain is Cytoplasmic. The interval Thr440 to Met508 is disordered. Residues Gln441–Ser458 are compositionally biased toward polar residues. The span at Lys459–Asp491 shows a compositional bias: basic and acidic residues. Thr489 carries the post-translational modification Phosphothreonine. The segment covering Asn498 to Met508 has biased composition (polar residues).

Directly interacts with VCP. Interacts with UBQLN1. Forms a complex with VCP and UBQLN1.

It is found in the endoplasmic reticulum membrane. The protein resides in the nucleus envelope. Involved in endoplasmic reticulum-associated protein degradation (ERAD). Acts as a platform to recruit both UBQLN1 and VCP to the ER during ERAD. This chain is UBX domain-containing protein 4 (UBXN4), found in Pongo abelii (Sumatran orangutan).